Here is a 633-residue protein sequence, read N- to C-terminus: 1-deoxy-D-xylulose-5-phosphate synthase (633 aa).

Thiamine diphosphate contacts are provided by residues histidine 72 and glycine 113–serine 115. Residue aspartate 144 participates in Mg(2+) binding. Thiamine diphosphate is bound by residues glycine 145–alanine 146, asparagine 173, tyrosine 284, and glutamate 367. Asparagine 173 provides a ligand contact to Mg(2+).

It belongs to the transketolase family. DXPS subfamily. In terms of assembly, homodimer. The cofactor is Mg(2+). It depends on thiamine diphosphate as a cofactor.

It catalyses the reaction D-glyceraldehyde 3-phosphate + pyruvate + H(+) = 1-deoxy-D-xylulose 5-phosphate + CO2. It functions in the pathway metabolic intermediate biosynthesis; 1-deoxy-D-xylulose 5-phosphate biosynthesis; 1-deoxy-D-xylulose 5-phosphate from D-glyceraldehyde 3-phosphate and pyruvate: step 1/1. Catalyzes the acyloin condensation reaction between C atoms 2 and 3 of pyruvate and glyceraldehyde 3-phosphate to yield 1-deoxy-D-xylulose-5-phosphate (DXP). This Lysinibacillus sphaericus (strain C3-41) protein is 1-deoxy-D-xylulose-5-phosphate synthase.